Consider the following 817-residue polypeptide: Sorting nexin-29 (817 aa).

In terms of domain architecture, RUN spans 37–181 (SDSDSRVTCL…ILFAINIDNK (145 aa)). Phosphoserine occurs at positions 269, 292, 293, 331, and 345. The interval 271-299 (DDEEDEQSSGDVFKKIPGAGESSEENSDR) is disordered. 2 disordered regions span residues 344–381 (KSID…LDAG) and 417–460 (APLG…LPSA). The segment covering 347 to 358 (DDEDADENEDDV) has biased composition (acidic residues). Over residues 369-378 (GHSESPEKPL) the composition is skewed to basic and acidic residues. The span at 445-460 (SPPGQESPLSSLLPSA) shows a compositional bias: low complexity. A Phosphoserine modification is found at Ser-451. Positions 466-546 (MTVSDLRQAI…VLKVQLKKYV (81 aa)) form a coiled coil. Position 641 is a phosphoserine (Ser-641). At Thr-643 the chain carries Phosphothreonine. Residues Ser-644 and Ser-648 each carry the phosphoserine modification. The PX domain maps to 658–781 (ALINVWIPSV…PFFVDITPPG (124 aa)). A disordered region spans residues 784–817 (LTKNSRPKVASRFPKLARGHPRETRNVEPQSGDL).

It belongs to the sorting nexin family.

This Bos taurus (Bovine) protein is Sorting nexin-29 (SNX29).